Reading from the N-terminus, the 137-residue chain is Large ribosomal subunit protein uL16 (137 aa).

The protein belongs to the universal ribosomal protein uL16 family. In terms of assembly, part of the 50S ribosomal subunit.

Its function is as follows. Binds 23S rRNA and is also seen to make contacts with the A and possibly P site tRNAs. This Cereibacter sphaeroides (strain ATCC 17025 / ATH 2.4.3) (Rhodobacter sphaeroides) protein is Large ribosomal subunit protein uL16.